A 137-amino-acid polypeptide reads, in one-letter code: uncharacterized protein (137 aa).

The next 5 helical transmembrane spans lie at 4 to 26 (AIIL…KIVC), 35 to 57 (IVVN…NIII), 62 to 84 (ILTY…YYAL), 89 to 111 (ASIV…ILFL), and 116 to 135 (TLPQ…LLSI). One can recognise an EamA domain in the interval 13-135 (VFYGVGTFFA…IIIGIILLSI (123 aa)).

It localises to the cell membrane. This is an uncharacterized protein from Methanocaldococcus jannaschii (strain ATCC 43067 / DSM 2661 / JAL-1 / JCM 10045 / NBRC 100440) (Methanococcus jannaschii).